Here is an 80-residue protein sequence, read N- to C-terminus: EMBRYO SURROUNDING FACTOR 1-like protein 1 (80 aa).

Positions 1 to 22 (MKSSHIALLCIVVLSLFALHEC) are cleaved as a signal peptide. Cystine bridges form between C38–C52, C43–C78, C50–C74, and C53–C64.

It belongs to the MEG family. Expressed in leaves.

In Arabidopsis thaliana (Mouse-ear cress), this protein is EMBRYO SURROUNDING FACTOR 1-like protein 1 (ESFL1).